Reading from the N-terminus, the 301-residue chain is Small ribosomal subunit protein uS2 (301 aa).

It belongs to the universal ribosomal protein uS2 family.

The chain is Small ribosomal subunit protein uS2 from Acidobacterium capsulatum (strain ATCC 51196 / DSM 11244 / BCRC 80197 / JCM 7670 / NBRC 15755 / NCIMB 13165 / 161).